The following is a 633-amino-acid chain: Phosphomethylpyrimidine synthase (633 aa).

Residues Asn-245, Met-274, Tyr-303, His-339, 359 to 361, 400 to 403, and Glu-439 contribute to the substrate site; these read SRG and DGLR. Zn(2+) is bound at residue His-443. Tyr-466 is a substrate binding site. His-507 contributes to the Zn(2+) binding site. [4Fe-4S] cluster-binding residues include Cys-587, Cys-590, and Cys-595.

It belongs to the ThiC family. In terms of assembly, homodimer. [4Fe-4S] cluster serves as cofactor.

It carries out the reaction 5-amino-1-(5-phospho-beta-D-ribosyl)imidazole + S-adenosyl-L-methionine = 4-amino-2-methyl-5-(phosphooxymethyl)pyrimidine + CO + 5'-deoxyadenosine + formate + L-methionine + 3 H(+). It functions in the pathway cofactor biosynthesis; thiamine diphosphate biosynthesis. Functionally, catalyzes the synthesis of the hydroxymethylpyrimidine phosphate (HMP-P) moiety of thiamine from aminoimidazole ribotide (AIR) in a radical S-adenosyl-L-methionine (SAM)-dependent reaction. This chain is Phosphomethylpyrimidine synthase, found in Neisseria gonorrhoeae (strain ATCC 700825 / FA 1090).